The sequence spans 398 residues: Acetate kinase (398 aa).

N8 contributes to the Mg(2+) binding site. K15 provides a ligand contact to ATP. R89 lines the substrate pocket. D146 functions as the Proton donor/acceptor in the catalytic mechanism. Residues 206 to 210 (HIGNG), 283 to 285 (DMR), and 331 to 335 (GMGEN) contribute to the ATP site. E383 contacts Mg(2+).

It belongs to the acetokinase family. In terms of assembly, homodimer. Mg(2+) serves as cofactor. It depends on Mn(2+) as a cofactor.

It is found in the cytoplasm. The enzyme catalyses acetate + ATP = acetyl phosphate + ADP. It participates in metabolic intermediate biosynthesis; acetyl-CoA biosynthesis; acetyl-CoA from acetate: step 1/2. Functionally, catalyzes the formation of acetyl phosphate from acetate and ATP. Can also catalyze the reverse reaction. This is Acetate kinase from Streptococcus pyogenes serotype M5 (strain Manfredo).